The chain runs to 885 residues: Sensor histidine kinase KdpD (885 aa).

A run of 4 helical transmembrane segments spans residues 384–404 (AIDM…GLWI), 415–435 (IILM…RSFI), 436–456 (IGFL…TEPR), and 464–484 (FDYP…SALL). Residues 660–880 (SISHDIRTPL…IFYFNIYTDF (221 aa)) form the Histidine kinase domain. Histidine 663 is subject to Phosphohistidine; by autocatalysis.

The protein localises to the membrane. The catalysed reaction is ATP + protein L-histidine = ADP + protein N-phospho-L-histidine.. Cyclic di-AMP is a negative regulator of the Kdp system. Its function is as follows. Member of the two-component regulatory system KdpD/KdpE that regulates the transcription of a series of virulence factors through sensing external K(+) concentrations. Also regulates capsular polysaccharide production. May function as a membrane-associated protein kinase that phosphorylates KdpE in response to environmental signals. In turn, KpdE functions as a transcriptional regulator by direct binding to promoter regions of target genes including spa, hla, aur and geh. In Staphylococcus aureus (strain NCTC 8325 / PS 47), this protein is Sensor histidine kinase KdpD.